A 133-amino-acid chain; its full sequence is Putative esterase TV1331 (133 aa).

This sequence belongs to the thioesterase PaaI family.

This is Putative esterase TV1331 from Thermoplasma volcanium (strain ATCC 51530 / DSM 4299 / JCM 9571 / NBRC 15438 / GSS1).